A 377-amino-acid polypeptide reads, in one-letter code: Protein FAM199X-B (377 aa).

Basic and acidic residues predominate over residues 240–254; it reads KEHSPRQRCTRESWK. Positions 240–350 are disordered; it reads KEHSPRQRCT…EQRQARKERI (111 aa). Residues 256–301 show a composition bias toward low complexity; sequence TSYSTASTSGVSGASVSSSSASMVSTASSTGSSGGNSASNSSANMS. Positions 319-338 are enriched in basic residues; that stretch reads DSKKRSKQRKLQQKALRKRQ. Residues 321–349 are a coiled coil; it reads KKRSKQRKLQQKALRKRQLKEQRQARKER. Positions 339–350 are enriched in basic and acidic residues; sequence LKEQRQARKERI.

This sequence belongs to the FAM199 family.

In Xenopus laevis (African clawed frog), this protein is Protein FAM199X-B (fam199x-b).